We begin with the raw amino-acid sequence, 339 residues long: Ketol-acid reductoisomerase (NADP(+)) (339 aa).

The KARI N-terminal Rossmann domain occupies methionine 1–threonine 182. Residues tyrosine 24 to glutamine 27, lysine 48, serine 51, threonine 53, and aspartate 83 to glutamine 86 each bind NADP(+). Histidine 108 is an active-site residue. NADP(+) is bound at residue glycine 134. The KARI C-terminal knotted domain occupies asparagine 183 to isoleucine 328. Mg(2+)-binding residues include aspartate 191, glutamate 195, glutamate 227, and glutamate 231. Residue serine 252 coordinates substrate.

The protein belongs to the ketol-acid reductoisomerase family. Requires Mg(2+) as cofactor.

It carries out the reaction (2R)-2,3-dihydroxy-3-methylbutanoate + NADP(+) = (2S)-2-acetolactate + NADPH + H(+). The enzyme catalyses (2R,3R)-2,3-dihydroxy-3-methylpentanoate + NADP(+) = (S)-2-ethyl-2-hydroxy-3-oxobutanoate + NADPH + H(+). It functions in the pathway amino-acid biosynthesis; L-isoleucine biosynthesis; L-isoleucine from 2-oxobutanoate: step 2/4. Its pathway is amino-acid biosynthesis; L-valine biosynthesis; L-valine from pyruvate: step 2/4. In terms of biological role, involved in the biosynthesis of branched-chain amino acids (BCAA). Catalyzes an alkyl-migration followed by a ketol-acid reduction of (S)-2-acetolactate (S2AL) to yield (R)-2,3-dihydroxy-isovalerate. In the isomerase reaction, S2AL is rearranged via a Mg-dependent methyl migration to produce 3-hydroxy-3-methyl-2-ketobutyrate (HMKB). In the reductase reaction, this 2-ketoacid undergoes a metal-dependent reduction by NADPH to yield (R)-2,3-dihydroxy-isovalerate. This Sinorhizobium fredii (strain NBRC 101917 / NGR234) protein is Ketol-acid reductoisomerase (NADP(+)).